The sequence spans 493 residues: Cytochrome P450 2E1 (493 aa).

298 to 303 serves as a coordination point for substrate; that stretch reads FAGTET. Heme is bound at residue Cys-437.

This sequence belongs to the cytochrome P450 family. Interacts with chaperones HSP70 and HSP90; this interaction is required for initial targeting to mitochondria. Heme serves as cofactor.

Its subcellular location is the endoplasmic reticulum membrane. The protein localises to the microsome membrane. It is found in the mitochondrion inner membrane. The catalysed reaction is an organic molecule + reduced [NADPH--hemoprotein reductase] + O2 = an alcohol + oxidized [NADPH--hemoprotein reductase] + H2O + H(+). The enzyme catalyses (5Z,8Z,11Z)-eicosatrienoate + reduced [NADPH--hemoprotein reductase] + O2 = 19-hydroxy-(5Z,8Z,11Z)-eicosatrienoate + oxidized [NADPH--hemoprotein reductase] + H2O + H(+). It carries out the reaction (5Z,8Z,11Z,14Z,17Z)-eicosapentaenoate + reduced [NADPH--hemoprotein reductase] + O2 = 19-hydroxy-(5Z,8Z,11Z,14Z,17Z)-eicosapentaenoate + oxidized [NADPH--hemoprotein reductase] + H2O + H(+). It catalyses the reaction (4Z,7Z,10Z,13Z,16Z,19Z)-docosahexaenoate + reduced [NADPH--hemoprotein reductase] + O2 = 21-hydroxy-(4Z,7Z,10Z,13Z,16Z,19Z)-docosahexaenoate + oxidized [NADPH--hemoprotein reductase] + H2O + H(+). The catalysed reaction is dodecanoate + reduced [NADPH--hemoprotein reductase] + O2 = 11-hydroxydodecanoate + oxidized [NADPH--hemoprotein reductase] + H2O + H(+). The enzyme catalyses tetradecanoate + reduced [NADPH--hemoprotein reductase] + O2 = 13-hydroxytetradecanoate + oxidized [NADPH--hemoprotein reductase] + H2O + H(+). It carries out the reaction 4-nitrophenol + NADPH + O2 + H(+) = 4-nitrocatechol + NADP(+) + H2O. It participates in lipid metabolism; fatty acid metabolism. Its activity is regulated as follows. The omega-1 hydroxylase activity is stimulated by cytochrome b5. A cytochrome P450 monooxygenase involved in the metabolism of fatty acids. Mechanistically, uses molecular oxygen inserting one oxygen atom into a substrate, and reducing the second into a water molecule, with two electrons provided by NADPH via cytochrome P450 reductase (NADPH--hemoprotein reductase). Catalyzes the hydroxylation of carbon-hydrogen bonds. Hydroxylates fatty acids specifically at the omega-1 position displaying the highest catalytic activity for saturated fatty acids. May be involved in the oxidative metabolism of xenobiotics. This Oryctolagus cuniculus (Rabbit) protein is Cytochrome P450 2E1 (CYP2E1).